The chain runs to 392 residues: 1-deoxy-D-xylulose 5-phosphate reductoisomerase (392 aa).

6 residues coordinate NADPH: Thr10, Gly11, Ser12, Ile13, Asn38, and Asn124. Lys125 serves as a coordination point for 1-deoxy-D-xylulose 5-phosphate. Position 126 (Glu126) interacts with NADPH. Mn(2+) is bound at residue Asp150. The 1-deoxy-D-xylulose 5-phosphate site is built by Ser151, Glu152, Ser176, and His199. Glu152 is a Mn(2+) binding site. Gly205 provides a ligand contact to NADPH. 1-deoxy-D-xylulose 5-phosphate is bound by residues Ser212, Asn217, Lys218, and Glu221. Glu221 contacts Mn(2+).

It belongs to the DXR family. Mg(2+) serves as cofactor. It depends on Mn(2+) as a cofactor.

It catalyses the reaction 2-C-methyl-D-erythritol 4-phosphate + NADP(+) = 1-deoxy-D-xylulose 5-phosphate + NADPH + H(+). It participates in isoprenoid biosynthesis; isopentenyl diphosphate biosynthesis via DXP pathway; isopentenyl diphosphate from 1-deoxy-D-xylulose 5-phosphate: step 1/6. Functionally, catalyzes the NADPH-dependent rearrangement and reduction of 1-deoxy-D-xylulose-5-phosphate (DXP) to 2-C-methyl-D-erythritol 4-phosphate (MEP). This Synechococcus sp. (strain JA-2-3B'a(2-13)) (Cyanobacteria bacterium Yellowstone B-Prime) protein is 1-deoxy-D-xylulose 5-phosphate reductoisomerase.